A 479-amino-acid polypeptide reads, in one-letter code: MTVIIQGRSFPDDLTQYAEFIGQGLLSPEEMRRIDQNAQALGISGLELMESAGTGLAMAARQYQPGKILILCGSGNNGGDGMVAARHLAGEADITVFWYDSGRQTDSTRTQLQRLLSCSVTSIPFRSRDDLIEHTRIFQDTDLIIDALLGTGGTGSVREPVRTCIEFANNAKAPILSADLPSPGIIPDRICAFHRAKTEGAHIYGIGIPLLAEISTGPGDLLILRNRNPDSHKGVGGNILVIGGGPYQGAPYLAGLAALRAGADIVRVVSPHYLPEPDIIHVPTAGDRITTADLATIIPLCKQADVVLCGPGLGPESHDVITSLAPYIRKGVFDADALRDPLPVAGESLYTPHAGEFARMSGLSPGKTPRERAHAIMKAQILGTVLLKGAVDVICDGSRVRFNQTGTPAMTTGGTGDVLAGVCAALMAVVPAFEAACIGAYVTGRAGELITQTCGYGMTARDLLTAVPQVLFRSTSERE.

The interval 1–214 (MTVIIQGRSF…GIGIPLLAEI (214 aa)) is NAD(P)H-hydrate epimerase. The region spanning 31–214 (MRRIDQNAQA…GIGIPLLAEI (184 aa)) is the YjeF N-terminal domain. An NADPHX 1; for epimerase activity region spans residues 76-80 (NNGGD). Positions 77 and 146 each coordinate K(+). Residues 150 to 156 (GTGGTGS) are NADPHX 1; for epimerase activity. Asp-179 contacts (6S)-NADPHX. K(+) is bound at residue Ser-182. In terms of domain architecture, YjeF C-terminal spans 216-474 (TGPGDLLILR…TAVPQVLFRS (259 aa)). The tract at residues 216 to 479 (TGPGDLLILR…VLFRSTSERE (264 aa)) is ADP-dependent (S)-NAD(P)H-hydrate dehydratase. (6S)-NADPHX is bound at residue Gly-312. The segment at 353–359 (HAGEFAR) is NADPHX 2; for dehydratase activity. ADP is bound by residues 388–392 (KGAVD) and 407–416 (TPAMTTGGTG). Position 417 (Asp-417) interacts with (6S)-NADPHX.

In the N-terminal section; belongs to the NnrE/AIBP family. This sequence in the C-terminal section; belongs to the NnrD/CARKD family. It depends on K(+) as a cofactor.

It catalyses the reaction (6S)-NADHX + ADP = AMP + phosphate + NADH + H(+). It carries out the reaction (6S)-NADPHX + ADP = AMP + phosphate + NADPH + H(+). The enzyme catalyses (6R)-NADHX = (6S)-NADHX. The catalysed reaction is (6R)-NADPHX = (6S)-NADPHX. Its function is as follows. Bifunctional enzyme that catalyzes the epimerization of the S- and R-forms of NAD(P)HX and the dehydration of the S-form of NAD(P)HX at the expense of ADP, which is converted to AMP. This allows the repair of both epimers of NAD(P)HX, a damaged form of NAD(P)H that is a result of enzymatic or heat-dependent hydration. This Methanospirillum hungatei JF-1 (strain ATCC 27890 / DSM 864 / NBRC 100397 / JF-1) protein is Bifunctional NAD(P)H-hydrate repair enzyme Nnr (nnr).